A 598-amino-acid chain; its full sequence is NADH-quinone oxidoreductase subunit C/D (598 aa).

Residues 1 to 189 (MTDLTTSDSL…DPYVLTKQKE (189 aa)) are NADH dehydrogenase I subunit C. The segment at 213–598 (DFMFLNLGPN…IDFVMSDVDR (386 aa)) is NADH dehydrogenase I subunit D.

The protein in the N-terminal section; belongs to the complex I 30 kDa subunit family. In the C-terminal section; belongs to the complex I 49 kDa subunit family. In terms of assembly, NDH-1 is composed of 13 different subunits. Subunits NuoB, CD, E, F, and G constitute the peripheral sector of the complex.

The protein resides in the cell inner membrane. It carries out the reaction a quinone + NADH + 5 H(+)(in) = a quinol + NAD(+) + 4 H(+)(out). NDH-1 shuttles electrons from NADH, via FMN and iron-sulfur (Fe-S) centers, to quinones in the respiratory chain. The immediate electron acceptor for the enzyme in this species is believed to be ubiquinone. Couples the redox reaction to proton translocation (for every two electrons transferred, four hydrogen ions are translocated across the cytoplasmic membrane), and thus conserves the redox energy in a proton gradient. In Yersinia pestis bv. Antiqua (strain Angola), this protein is NADH-quinone oxidoreductase subunit C/D.